A 430-amino-acid polypeptide reads, in one-letter code: uncharacterized protein (430 aa).

This is an uncharacterized protein from Escherichia coli (strain K12).